The following is a 537-amino-acid chain: Lysosomal cobalamin transport escort protein LMBD1 (537 aa).

Residues 1 to 7 lie on the Extracellular side of the membrane; that stretch reads MAAAAAE. Residues 8-28 form a helical membrane-spanning segment; sequence LVIGWCIFGLLLLAILAFCWV. Residues 29-47 lie on the Cytoplasmic side of the membrane; sequence YVRKYQSQRESEVVSTVTA. The helical transmembrane segment at 48 to 68 threads the bilayer; that stretch reads IFSLAVALITSALLPVDIFLV. At 69–97 the chain is on the extracellular side; the sequence is SYMKNQNGTFKDWADANVTVQIENTVLYG. 2 N-linked (GlcNAc...) asparagine glycosylation sites follow: asparagine 75 and asparagine 85. A helical transmembrane segment spans residues 98–118; sequence YYTLYSVILFCVFFWIPFVYF. Residues 119–141 lie on the Cytoplasmic side of the membrane; that stretch reads YYEEKDEDDASKCTQIKTALKYT. A helical membrane pass occupies residues 142–162; the sequence is LGFVVICALLLLVGAFVPLHL. Over 163-185 the chain is Extracellular; that stretch reads PNNNNSTEWEKVKLLFEDLGTGQ. Residues asparagine 166 and asparagine 167 are each glycosylated (N-linked (GlcNAc...) asparagine). The chain crosses the membrane as a helical span at residues 186–206; sequence GLAALSFSISSLTLIGMLAAI. The Cytoplasmic segment spans residues 207 to 302; the sequence is TYTAYGMSAL…KFCGALRPLK (96 aa). Residues 229–232 carry the YERL motif; mediates interaction with adapter protein complex 2 and is essential for its function in clathrin-mediated endocytosis of INSR motif; the sequence is YERL. Threonine 235 bears the Phosphothreonine mark. A WTKF motif; mediates interaction with adapter protein complex 2 and is essential for its function in clathrin-mediated endocytosis of INSR motif is present at residues 291–294; the sequence is WTKF. Residues 303–323 form a helical membrane-spanning segment; it reads IIWGIFFILVALLFVISLFLS. The Extracellular portion of the chain corresponds to 324–361; that stretch reads NLDKALHSAGIDSGFIIFGTNLSNPLNMLLPLLQTVFP. An N-linked (GlcNAc...) asparagine glycan is attached at asparagine 344. The helical transmembrane segment at 362–382 threads the bilayer; that stretch reads LDYILITIIIMYFIFTSMAGI. Topologically, residues 383-405 are cytoplasmic; the sequence is RNIGIWFFWIRLYKIRRGRTRPQ. A helical membrane pass occupies residues 406 to 426; it reads ALLFLCMILLLIVLHTSYMIY. Residues 427-483 are Extracellular-facing; it reads SLAPQYVMYGSQNYLIESNITSDAHKGNSTLAVPKRCDADAPKDQCTVTRTYIFLHK. Residues asparagine 445 and asparagine 454 are each glycosylated (N-linked (GlcNAc...) asparagine). The helical transmembrane segment at 484–504 threads the bilayer; it reads FWFFSAAYYFGNWAFLVVFLI. Residues 505 to 537 are Cytoplasmic-facing; it reads GLIVSCCKGKKSVIEGVDEDSDLSDDEPSAYSA. A phosphoserine mark is found at serine 525 and serine 528.

Belongs to the LIMR family. LMBRD1 subfamily. Interacts with ABCD4; this interaction induces the translocation of ABCD4 from the endoplasmic reticulum to the lysosome. Interacts with ABCD4 and MMACHC; this interaction ensures the transport of cobalamin from the lysosome to the cytoplasm. Interacts with INSR, adapter protein complex 2 and clathrin heavy chain. In terms of processing, N-glycosylated.

It is found in the endoplasmic reticulum membrane. The protein localises to the lysosome membrane. The protein resides in the cell membrane. It localises to the cytoplasmic vesicle. Its subcellular location is the clathrin-coated vesicle. Its function is as follows. Lysosomal membrane chaperone required to export cobalamin (vitamin B12) from the lysosome to the cytosol, allowing its conversion to cofactors. Targets ABCD4 transporter from the endoplasmic reticulum to the lysosome. Then forms a complex with lysosomal ABCD4 and cytoplasmic MMACHC to transport cobalamin across the lysosomal membrane. Acts as an adapter protein which plays an important role in mediating and regulating the internalization of the insulin receptor (INSR). Involved in clathrin-mediated endocytosis of INSR via its interaction with adapter protein complex 2. Essential for the initiation of gastrulation and early formation of mesoderm structures during embryogenesis. In Mus musculus (Mouse), this protein is Lysosomal cobalamin transport escort protein LMBD1.